A 176-amino-acid polypeptide reads, in one-letter code: 3-hydroxyanthranilate 3,4-dioxygenase (176 aa).

Arg44 is an O2 binding site. Fe cation is bound by residues His48, Glu54, and His92. Residue Glu54 participates in substrate binding. Arg96 and Glu106 together coordinate substrate. Fe cation is bound by residues Cys121, Cys124, Cys158, and Cys161.

This sequence belongs to the 3-HAO family. As to quaternary structure, homodimer. Requires Fe(2+) as cofactor.

The catalysed reaction is 3-hydroxyanthranilate + O2 = (2Z,4Z)-2-amino-3-carboxymuconate 6-semialdehyde. The protein operates within cofactor biosynthesis; NAD(+) biosynthesis; quinolinate from L-kynurenine: step 3/3. Catalyzes the oxidative ring opening of 3-hydroxyanthranilate to 2-amino-3-carboxymuconate semialdehyde, which spontaneously cyclizes to quinolinate. The chain is 3-hydroxyanthranilate 3,4-dioxygenase from Xanthomonas campestris pv. campestris (strain B100).